The chain runs to 105 residues: Small ribosomal subunit protein bS20 (105 aa).

This sequence belongs to the bacterial ribosomal protein bS20 family.

Its function is as follows. Binds directly to 16S ribosomal RNA. The sequence is that of Small ribosomal subunit protein bS20 from Caldanaerobacter subterraneus subsp. tengcongensis (strain DSM 15242 / JCM 11007 / NBRC 100824 / MB4) (Thermoanaerobacter tengcongensis).